A 199-amino-acid polypeptide reads, in one-letter code: Recombination protein RecR (199 aa).

Residues 57–72 (CPICGNITEKEVCDIC) form a C4-type zinc finger. Positions 80–176 (TTIMVVEQPK…KVTRLAAGLS (97 aa)) constitute a Toprim domain.

The protein belongs to the RecR family.

In terms of biological role, may play a role in DNA repair. It seems to be involved in an RecBC-independent recombinational process of DNA repair. It may act with RecF and RecO. This Lactobacillus helveticus (strain DPC 4571) protein is Recombination protein RecR.